The chain runs to 29 residues: Protein YldA (29 aa).

A helical membrane pass occupies residues 5 to 25 (FYILIGFLIMAAIIVMAVLYL).

It localises to the cell inner membrane. In Escherichia coli (strain K12), this protein is Protein YldA.